The following is a 372-amino-acid chain: Serine protease 44 (372 aa).

The first 25 residues, 1 to 25 (MAFQGCDCFGLLVWLLLLQTRLGKA), serve as a signal peptide directing secretion. Topologically, residues 26 to 351 (RMVPGTPSLS…KELSRASCWK (326 aa)) are extracellular. The tract at residues 31-72 (TPSLSPLPSENGLDDSGVNPQERPLTGMPETSLPRKPGDSTR) is disordered. Residues 112 to 345 (IVGGRPAPAR…YRDWIIKELS (234 aa)) form the Peptidase S1 domain. An intrachain disulfide couples C137 to C153. Active-site charge relay system residues include H152 and D197. N-linked (GlcNAc...) asparagine glycosylation is present at N208. 3 disulfide bridges follow: C231–C303, C262–C283, and C293–C321. S297 functions as the Charge relay system in the catalytic mechanism. The chain crosses the membrane as a helical span at residues 352–372 (LSGFLVLSVCLVLHLAIVVAL).

It belongs to the peptidase S1 family. Testis-specific. Expressed by primary and secondary spermatocytes.

It is found in the membrane. The protein resides in the cytoplasm. Lacks protease activity in vitro. This is Serine protease 44 from Mus musculus (Mouse).